The sequence spans 150 residues: uncharacterized protein (150 aa).

Belongs to the aspartate/glutamate racemases family.

This is an uncharacterized protein from Pectobacterium carotovorum subsp. carotovorum (Erwinia carotovora subsp. carotovora).